Reading from the N-terminus, the 513-residue chain is Sugar transport protein 7 (513 aa).

Topologically, residues 1-26 (MAGGSFGPTGVAKERAEQYQGKVTSY) are cytoplasmic. Helical transmembrane passes span 27–47 (VIIA…DIGI), 84–104 (GLAA…LVAS), 121–141 (ISFL…MLLA), 144–164 (IMLG…LSEV), 171–191 (GGLN…ANMV), 205–225 (LSLG…YFLP), 286–306 (LVMA…SILF), 324–344 (YSSA…IGLV), 351–371 (ALLI…AVIL), 387–407 (VIVV…WGPL), 427–447 (ITVA…LGLL), and 452–472 (FGIF…VYFL). Residues 473–513 (LPETKGVPIEEMTLLWSKHWFWKKVLPDATNLEDESKNVSV) lie on the Cytoplasmic side of the membrane.

This sequence belongs to the major facilitator superfamily. Sugar transporter (TC 2.A.1.1) family.

It localises to the cell membrane. Its function is as follows. Mediates an active uptake of hexoses, probably by sugar/hydrogen symport. This Arabidopsis thaliana (Mouse-ear cress) protein is Sugar transport protein 7 (STP7).